We begin with the raw amino-acid sequence, 398 residues long: 1-deoxy-D-xylulose 5-phosphate reductoisomerase (398 aa).

7 residues coordinate NADPH: Thr28, Gly29, Ser30, Ile31, Gly54, Asn57, and Asn135. Residue Lys136 participates in 1-deoxy-D-xylulose 5-phosphate binding. Residue Glu137 participates in NADPH binding. A Mn(2+)-binding site is contributed by Asp159. Residues Ser160, Glu161, Ser185, and His208 each contribute to the 1-deoxy-D-xylulose 5-phosphate site. Glu161 contacts Mn(2+). Gly214 is an NADPH binding site. 1-deoxy-D-xylulose 5-phosphate is bound by residues Ser221, Asn226, Lys227, and Glu230. Glu230 contributes to the Mn(2+) binding site.

It belongs to the DXR family. Requires Mg(2+) as cofactor. The cofactor is Mn(2+).

The catalysed reaction is 2-C-methyl-D-erythritol 4-phosphate + NADP(+) = 1-deoxy-D-xylulose 5-phosphate + NADPH + H(+). The protein operates within isoprenoid biosynthesis; isopentenyl diphosphate biosynthesis via DXP pathway; isopentenyl diphosphate from 1-deoxy-D-xylulose 5-phosphate: step 1/6. Functionally, catalyzes the NADPH-dependent rearrangement and reduction of 1-deoxy-D-xylulose-5-phosphate (DXP) to 2-C-methyl-D-erythritol 4-phosphate (MEP). The protein is 1-deoxy-D-xylulose 5-phosphate reductoisomerase of Rhodococcus jostii (strain RHA1).